The chain runs to 468 residues: UDP-N-acetylmuramate--L-alanine ligase (468 aa).

An ATP-binding site is contributed by glycine 112 to threonine 118.

This sequence belongs to the MurCDEF family.

It is found in the cytoplasm. The enzyme catalyses UDP-N-acetyl-alpha-D-muramate + L-alanine + ATP = UDP-N-acetyl-alpha-D-muramoyl-L-alanine + ADP + phosphate + H(+). Its pathway is cell wall biogenesis; peptidoglycan biosynthesis. In terms of biological role, cell wall formation. In Bordetella pertussis (strain Tohama I / ATCC BAA-589 / NCTC 13251), this protein is UDP-N-acetylmuramate--L-alanine ligase.